A 2885-amino-acid polypeptide reads, in one-letter code: E3 ubiquitin-protein ligase hyd (2885 aa).

The segment at 83-138 (SDAKCSTSGGSGTASASKAPSSSRPMARSRARLLRATGRSNSTGQGSGSRSTGVII) is disordered. Low complexity-rich tracts occupy residues 95–108 (TASA…SRPM) and 116–138 (LRAT…GVII). The UBA domain occupies 154-196 (YVPEELISQAEVVLQGKSRNLIIRELQRTNLDVNLAVNNLLSR). Low complexity predominate over residues 266-276 (ANANAADSNQS). Disordered stretches follow at residues 266-291 (ANAN…TGNS), 580-664 (NNLN…GRKD), and 711-731 (AATS…KEDD). Polar residues-rich tracts occupy residues 277–291 (TTRS…TGNS) and 598–615 (AMPS…SNSK). Phosphoserine occurs at positions 628 and 631. Basic and acidic residues predominate over residues 650–664 (TTKEDSNAPQEGRKD). Residues 711–722 (AATSSTSNTAST) are compositionally biased toward low complexity. S967 carries the phosphoserine modification. A compositionally biased stretch (low complexity) spans 1008–1032 (ASSSNENSSFATMSSSAAGSASSTS). The tract at residues 1008–1035 (ASSSNENSSFATMSSSAAGSASSTSRDN) is disordered. Residues 1217 to 1285 (DTCSFTWTGA…EKCKCKALIA (69 aa)) form a UBR-type zinc finger. S1362 is subject to Phosphoserine. The segment at 1642–1761 (NEDGMQDDES…IRSRDTARSS (120 aa)) is disordered. Over residues 1669–1681 (NQSNQEVQRSVQA) the composition is skewed to polar residues. Acidic residues predominate over residues 1696 to 1721 (LEDESGDSSAQEEDGSEDGESDDQSD). A compositionally biased stretch (polar residues) spans 1735–1749 (TNSNARSDLAPQTMQ). S2037 carries the post-translational modification Phosphoserine. A disordered region spans residues 2124 to 2143 (IDSSKTGDGNVTNKAEGSTD). Phosphoserine is present on S2183. Positions 2473–2492 (NLDARPYTPPNSSDNATPES) are disordered. Residues 2482–2492 (PNSSDNATPES) show a composition bias toward polar residues. Residues 2484-2561 (SSDNATPESL…AIEIITFKQK (78 aa)) form the PABC domain. S2574 carries the phosphoserine modification. Residues 2782-2885 (FNDESSEGPD…AIKSKNFGFV (104 aa)) enclose the HECT domain. Catalysis depends on C2854, which acts as the Glycyl thioester intermediate.

Belongs to the UBR5 family.

Its subcellular location is the nucleus. It is found in the cytoplasm. The catalysed reaction is S-ubiquitinyl-[E2 ubiquitin-conjugating enzyme]-L-cysteine + [acceptor protein]-L-lysine = [E2 ubiquitin-conjugating enzyme]-L-cysteine + N(6)-ubiquitinyl-[acceptor protein]-L-lysine.. It participates in protein modification; protein ubiquitination. E3 ubiquitin-protein ligase which accepts ubiquitin from an E2 ubiquitin-conjugating enzyme in the form of a thioester and then directly transfers the ubiquitin to targeted substrate. Required for regulation of cell proliferation in imaginal disks and germ cells. Acts as a negative regulator of hh, ci and dpp expression in the anterior of the eye disk. Acts as a positive regulator of the canonical Wnt signaling pathway by mediating ubiquitination and degradation of gro. Catalyzes 'Lys-63'-linked polyubiquitination of akirin, thereby activating the immune deficiency pathway (Imd). This chain is E3 ubiquitin-protein ligase hyd (hyd), found in Drosophila melanogaster (Fruit fly).